Reading from the N-terminus, the 667-residue chain is Receptor for retinol uptake STRA6 (667 aa).

Positions 1 to 13 (MSSQPAGNQTSPG) are enriched in polar residues. Positions 1-22 (MSSQPAGNQTSPGPTEDYSYGS) are disordered. Residues 1–50 (MSSQPAGNQTSPGPTEDYSYGSWYIDEPQGGEELQPEGEVPSCHTSIPPS) are Extracellular-facing. Asn-8 carries an N-linked (GlcNAc...) asparagine glycan. The chain crosses the membrane as a helical span at residues 51–71 (LYHACLASLSILVLLLLAMLV). Topologically, residues 72-98 (RRRQLWPDCVRGRPGLPSPVDFLAGDR) are cytoplasmic. The helical transmembrane segment at 99–119 (PQAVPAAVFVVLFSSLCLLLP) threads the bilayer. At 120-144 (DEDPLPFLTLASAPSQDGKTEAPRG) the chain is on the extracellular side. Residues 145–165 (AWKILGLFYYAALCYPLAACA) traverse the membrane as a helical segment. The Cytoplasmic portion of the chain corresponds to 166–168 (TAG). The chain crosses the membrane as a helical span at residues 169–189 (HTAAHLLGSTLSWAHLGVQVW). Topologically, residues 190 to 205 (QRAECPQVPKIYKYYS) are extracellular. A helical membrane pass occupies residues 206-226 (LLASLPLLLGLGFLSLWYPVQ). The Cytoplasmic segment spans residues 227-295 (LVRSFSCRTG…PQPGFRLPLK (69 aa)). Positions 235–293 (TGAGSKGLQSSYSEEYLRNLLCRKKLGSSSHTSKHGFLSWAWVCLRHCIYTPQPGFRLP) are interaction with RBP1. Residues 296 to 316 (LVLSATLTGTAIYQVALLLLV) traverse the membrane as a helical segment. Residues 317-367 (GMVPNIQKVRAGVTTDVSYLLAGFGIVLSEDKQEVVELVKHHLWALEVCYI) are Extracellular-facing. A helical membrane pass occupies residues 368-388 (SALVLSCSLTFLVLMRSLVTH). The Cytoplasmic segment spans residues 389 to 422 (RTNLRALHRGAALDSSPLHRSPHPSRRAIFCWMS). Residues 423-443 (FSAYQTAFICLGLLVQQIIFF) form a helical membrane-spanning segment. Topologically, residues 444-473 (LGTTALAFLVLMPVLHGRNLLLFRSLESSW) are extracellular. The chain crosses the membrane as a helical span at residues 474 to 494 (PFWLTLALAVILQSMAAHWVF). The Cytoplasmic portion of the chain corresponds to 495 to 509 (LETHDGHPQLTNRRV). The helical intramembrane region spans 510–547 (LYAATFLLFPLNVLVGAMVATWRVLLSALYNAIHLGQM). Over 548–667 (DLSLLPPRAA…ALLGANGAQP (120 aa)) the chain is Cytoplasmic. Position 643 is a phosphotyrosine (Tyr-643).

As to quaternary structure, homodimer. Interacts with JAK2 and STAT5. Interacts (via extracellular domains) with RBP4. Interacts (via cytoplasmic domains) with RBP1. Phosphorylated on tyrosine residues in response to RBP4 binding. Phosphorylation requires the presence of LRAT, suggesting it may be triggered by the uptake of retinol that is then metabolized within the cell to retinoids that function as signaling molecules.

The protein localises to the cell membrane. Functionally, functions as a retinol transporter. Accepts all-trans retinol from the extracellular retinol-binding protein RBP4, facilitates retinol transport across the cell membrane, and then transfers retinol to the cytoplasmic retinol-binding protein RBP1. Retinol uptake is enhanced by LRAT, an enzyme that converts retinol to all-trans retinyl esters, the storage forms of vitamin A. Contributes to the activation of a signaling cascade that depends on retinol transport and LRAT-dependent generation of retinol metabolites that then trigger activation of JAK2 and its target STAT5, and ultimately increase the expression of SOCS3 and inhibit cellular responses to insulin. Important for the homeostasis of vitamin A and its derivatives, such as retinoic acid. STRA6-mediated transport is particularly important in the eye, and under conditions of dietary vitamin A deficiency. Does not transport retinoic acid. This Pongo abelii (Sumatran orangutan) protein is Receptor for retinol uptake STRA6 (STRA6).